Here is a 232-residue protein sequence, read N- to C-terminus: Two-component response regulator ORR4 (232 aa).

The 137-residue stretch at His-11 to Leu-147 folds into the Response regulatory domain. Asp-80 is subject to 4-aspartylphosphate. 2 disordered regions span residues Leu-153–Ala-174 and Ala-202–Thr-232. Positions Val-209–Thr-232 are enriched in polar residues.

The protein belongs to the ARR family. Type-A subfamily. Two-component system major event consists of a His-to-Asp phosphorelay between a sensor histidine kinase (HK) and a response regulator (RR). In plants, the His-to-Asp phosphorelay involves an additional intermediate named Histidine-containing phosphotransfer protein (HPt). This multistep phosphorelay consists of a His-Asp-His-Asp sequential transfer of a phosphate group between first a His and an Asp of the HK protein, followed by the transfer to a conserved His of the HPt protein and finally the transfer to an Asp in the receiver domain of the RR protein. In terms of tissue distribution, expressed in mature leaves and flowers, and at low levels in roots and shoots.

In terms of biological role, functions as a response regulator involved in His-to-Asp phosphorelay signal transduction system. Phosphorylation of the Asp residue in the receiver domain activates the ability of the protein to promote the transcription of target genes. Type-A response regulators seem to act as negative regulators of the cytokinin signaling. The chain is Two-component response regulator ORR4 from Oryza sativa subsp. indica (Rice).